Reading from the N-terminus, the 411-residue chain is MTSATDKSIDRLVVNAKTRRRNSSVGKIDLGDTVPGFAAMPESAASKNEAKKRMKALTGDSKKDSDLLWKVWFSYREMNYRHSWLTPFFILVCVYSAYFLSGNRTESNPLHMFVAISYQVDGTDSYAKGIKDLSFVFFYMIFFTFLREFLMDVVIRPFTVYLNVTSEHRQKRMLEQMYAIFYCGVSGPFGLYIMYHSDLWLFKTKPMYRTYPVITNPFLFKIFYLGQAAFWAQQACVLVLQLEKPRKDYKELVFHHIVTLLLIWSSYVFHFTKMGLAIYITMDVSDFFLSLSKTLNYLNSVFTPFVFGLFVFFWIYLRHVVNIRILWSVLTEFRHEGNYVLNFATQQYKCWISLPIVFVLIAALQLVNLYWLFLILRILYRLIWQGIQKDERSDSDSDESAENEESKEKCE.

Topologically, residues 1–81 are cytoplasmic; that stretch reads MTSATDKSID…WFSYREMNYR (81 aa). A phosphoserine mark is found at S23 and S24. A helical membrane pass occupies residues 82 to 102; the sequence is HSWLTPFFILVCVYSAYFLSG. A glycan (N-linked (GlcNAc...) asparagine) is linked at N103. At 103 to 130 the chain is on the lumenal side; that stretch reads NRTESNPLHMFVAISYQVDGTDSYAKGI. Residues 131–155 form a helical membrane-spanning segment; that stretch reads KDLSFVFFYMIFFTFLREFLMDVVI. At 156–172 the chain is on the cytoplasmic side; it reads RPFTVYLNVTSEHRQKR. In terms of domain architecture, TLC spans 168-385; it reads HRQKRMLEQM…LRILYRLIWQ (218 aa). Residues 173–194 traverse the membrane as a helical segment; it reads MLEQMYAIFYCGVSGPFGLYIM. Residues 195–217 lie on the Lumenal side of the membrane; that stretch reads YHSDLWLFKTKPMYRTYPVITNP. Residues 218–240 traverse the membrane as a helical segment; it reads FLFKIFYLGQAAFWAQQACVLVL. The Cytoplasmic portion of the chain corresponds to 241-249; the sequence is QLEKPRKDY. A helical transmembrane segment spans residues 250 to 268; the sequence is KELVFHHIVTLLLIWSSYV. L252 contacts fumonisin B1. Residue V258 participates in hexacosanoate binding. At 269 to 273 the chain is on the lumenal side; it reads FHFTK. A helical membrane pass occupies residues 274–295; the sequence is MGLAIYITMDVSDFFLSLSKTL. Over 296-305 the chain is Cytoplasmic; the sequence is NYLNSVFTPF. The fumonisin B1 site is built by T303, P304, and R318. A helical membrane pass occupies residues 306 to 334; that stretch reads VFGLFVFFWIYLRHVVNIRILWSVLTEFR. Residues 335 to 353 lie on the Lumenal side of the membrane; it reads HEGNYVLNFATQQYKCWIS. Residues L341, C350, and L364 each coordinate hexacosanoate. Residues 354-382 form a helical membrane-spanning segment; it reads LPIVFVLIAALQLVNLYWLFLILRILYRL. The fumonisin B1 site is built by I378, R381, and L382. At 383 to 411 the chain is on the cytoplasmic side; it reads IWQGIQKDERSDSDSDESAENEESKEKCE. The disordered stretch occupies residues 390–411; sequence DERSDSDSDESAENEESKEKCE.

This sequence belongs to the sphingosine N-acyltransferase family. Component of the ceramide synthase complex composed of at least LAC1, LAG1 and LIP1. Forms a heterotetrameric complex, where one unit of the LIP1 homodimer interacts with LAC1 and the other with either LAC1 or LAG1. Post-translationally, phosphorylated; phosphorylation is induced upon disruption of sphingolipid synthesis.

It localises to the endoplasmic reticulum membrane. It catalyses the reaction a very long-chain fatty acyl-CoA + a sphingoid base = an N-(very-long-chain fatty acyl)-sphingoid base + CoA + H(+). The enzyme catalyses hexacosanoyl-CoA + sphinganine = N-hexacosanoylsphinganine + CoA + H(+). It carries out the reaction tetracosanoyl-CoA + sphinganine = N-tetracosanoylsphinganine + CoA + H(+). The catalysed reaction is eicosanoyl-CoA + sphinganine = N-eicosanoylsphinganine + CoA + H(+). It catalyses the reaction a fatty acyl-CoA + sphinganine = an N-acylsphinganine + CoA + H(+). The enzyme catalyses (4R)-hydroxysphinganine + a fatty acyl-CoA = an N-acyl-(4R)-4-hydroxysphinganine + CoA + H(+). The protein operates within lipid metabolism; sphingolipid metabolism. As part of the ceramide synthase complex, inhibited by the sphinganine analog mycotoxin, fumonisin B1 (FB1). Activated by ACB1, as part of the ceramide synthase complex. Functionally, component of the ceramide synthase complex that catalyzes the transfer of the acyl chain from acyl-CoA to a sphingoid base, with high selectivity toward hexacosanoyl-CoA (C26:0-CoA). N-acylates sphinganine and phytosphingosine bases to form dihydroceramides and phytoceramides, respectively. Has a higher affinity for phytosphingosine (PHS) than dihydrosphingosine (DHS), and thus preferentially produces phytoceramides for the establishment of lateral diffusion barriers in the cortical endoplasmic reticulum and nuclear envelope. Redundant with LAC1 but requires SUR2 to compensate for sphingolipid biosynthesis. Disruption or inhibition of sphingolipid synthesis leads to the activation and phosphorylation of YPK1 through the TORC2 and PKH1 pathways, which phosphorylates ORM1 and LAG1 to activate sphingolipid synthesis. Facilitates ER-to-Golgi transport of GPI-anchored proteins. Involved in the aging process. Along with LAC1, plays a role in pheromone-induced MAP kinase-activation of mating and formation of diploid cells. May also play a role, together with LAC1, in the polarized membrane distribution of phosphatidylinositol 4,5 biphosphate required for STE5 localization to the plasma membrane. The chain is Ceramide synthase LAG1 (LAG1) from Saccharomyces cerevisiae (strain ATCC 204508 / S288c) (Baker's yeast).